A 178-amino-acid polypeptide reads, in one-letter code: ATP synthase subunit delta (178 aa).

The protein belongs to the ATPase delta chain family. F-type ATPases have 2 components, F(1) - the catalytic core - and F(0) - the membrane proton channel. F(1) has five subunits: alpha(3), beta(3), gamma(1), delta(1), epsilon(1). F(0) has three main subunits: a(1), b(2) and c(10-14). The alpha and beta chains form an alternating ring which encloses part of the gamma chain. F(1) is attached to F(0) by a central stalk formed by the gamma and epsilon chains, while a peripheral stalk is formed by the delta and b chains.

The protein localises to the cell inner membrane. F(1)F(0) ATP synthase produces ATP from ADP in the presence of a proton or sodium gradient. F-type ATPases consist of two structural domains, F(1) containing the extramembraneous catalytic core and F(0) containing the membrane proton channel, linked together by a central stalk and a peripheral stalk. During catalysis, ATP synthesis in the catalytic domain of F(1) is coupled via a rotary mechanism of the central stalk subunits to proton translocation. In terms of biological role, this protein is part of the stalk that links CF(0) to CF(1). It either transmits conformational changes from CF(0) to CF(1) or is implicated in proton conduction. The polypeptide is ATP synthase subunit delta (Azotobacter vinelandii (strain DJ / ATCC BAA-1303)).